Reading from the N-terminus, the 334-residue chain is Protein-glutamate methylesterase/protein-glutamine glutaminase 1 (334 aa).

Positions 2–120 constitute a Response regulatory domain; the sequence is NIGIVNDLPL…GAAGDTTKLL (119 aa). 4-aspartylphosphate is present on Asp-53. Positions 145–334 constitute a CheB-type methylesterase domain; that stretch reads RAGGGPLIAI…AGELAALARI (190 aa). Active-site residues include Ser-157, His-184, and Asp-277.

This sequence belongs to the CheB family. Post-translationally, phosphorylated by CheA. Phosphorylation of the N-terminal regulatory domain activates the methylesterase activity.

The protein localises to the cytoplasm. It carries out the reaction [protein]-L-glutamate 5-O-methyl ester + H2O = L-glutamyl-[protein] + methanol + H(+). It catalyses the reaction L-glutaminyl-[protein] + H2O = L-glutamyl-[protein] + NH4(+). Its function is as follows. Involved in chemotaxis. Part of a chemotaxis signal transduction system that modulates chemotaxis in response to various stimuli. Catalyzes the demethylation of specific methylglutamate residues introduced into the chemoreceptors (methyl-accepting chemotaxis proteins or MCP) by CheR. Also mediates the irreversible deamidation of specific glutamine residues to glutamic acid. This Burkholderia lata (strain ATCC 17760 / DSM 23089 / LMG 22485 / NCIMB 9086 / R18194 / 383) protein is Protein-glutamate methylesterase/protein-glutamine glutaminase 1.